A 630-amino-acid polypeptide reads, in one-letter code: Phosphatidylinositol 4-kinase gamma 5 (630 aa).

Residues R41 to R98 enclose the Ubiquitin-like; degenerate domain. The PI3K/PI4K catalytic domain maps to G162–P459. The segment at V168–G174 is G-loop. ATP contacts are provided by residues N169 to A175, K190, and Q279 to I282. The interval L312–N320 is catalytic loop. Positions P339–I365 are activation loop. ATP is bound at residue D341. The disordered stretch occupies residues L500–D527. Residues T506–D524 show a composition bias toward acidic residues. Residue S571 is modified to Phosphoserine.

Belongs to the PI3/PI4-kinase family. Type II PI4K subfamily. As to quaternary structure, interacts with AHK2.

It carries out the reaction a 1,2-diacyl-sn-glycero-3-phospho-(1D-myo-inositol) + ATP = a 1,2-diacyl-sn-glycero-3-phospho-(1D-myo-inositol 4-phosphate) + ADP + H(+). Functionally, the phosphorylation of phosphatidylinositol (PI) to PI4P is the first committed step in the generation of phosphatidylinositol 4,5-bisphosphate (PIP2), a precursor of the second messenger inositol 1,4,5-trisphosphate (InsP3). This is Phosphatidylinositol 4-kinase gamma 5 (PI4KG5) from Arabidopsis thaliana (Mouse-ear cress).